The following is a 302-amino-acid chain: NAD kinase 2 (302 aa).

D78 functions as the Proton acceptor in the catalytic mechanism. Residues 78–79 (DG), 152–153 (NE), D182, 193–198 (TAYSLS), and A217 each bind NAD(+).

It belongs to the NAD kinase family. A divalent metal cation is required as a cofactor.

Its subcellular location is the cytoplasm. It catalyses the reaction NAD(+) + ATP = ADP + NADP(+) + H(+). Functionally, involved in the regulation of the intracellular balance of NAD and NADP, and is a key enzyme in the biosynthesis of NADP. Catalyzes specifically the phosphorylation on 2'-hydroxyl of the adenosine moiety of NAD to yield NADP. This Prochlorococcus marinus (strain SARG / CCMP1375 / SS120) protein is NAD kinase 2.